Consider the following 354-residue polypeptide: AT-rich binding protein (354 aa).

Residues 31–54 (IVCHTCQEELQTQDKFWKHIQDEH) form a C2H2-type 1 zinc finger. Disordered stretches follow at residues 84 to 124 (LPLY…HDDQ) and 256 to 276 (EVQQ…SSAM). Composition is skewed to basic and acidic residues over residues 89–100 (KVSENDQQRDDV) and 109–124 (QKEP…HDDQ). The span at 264–276 (TNNSTTASASSAM) shows a compositional bias: low complexity. 2 C2H2-type zinc fingers span residues 285–309 (YICD…RSVH) and 315–338 (FACE…KKKH).

As to quaternary structure, homooctamer. As to expression, fat body.

It localises to the nucleus. Functionally, may be a transcription factor for genes having (A+T) stretches in their promoter and/or enhancer regions. Binds to AT rich DNA. This is AT-rich binding protein from Sarcophaga peregrina (Flesh fly).